The sequence spans 154 residues: Small ribosomal subunit protein uS15 (154 aa).

Basic residues predominate over residues 1–11; the sequence is MSRLHAHKRYH. Positions 1 to 24 are disordered; it reads MSRLHAHKRYHGQSGSKRPLRTTK.

It belongs to the universal ribosomal protein uS15 family. Part of the 30S ribosomal subunit.

The sequence is that of Small ribosomal subunit protein uS15 from Nanoarchaeum equitans (strain Kin4-M).